Here is a 209-residue protein sequence, read N- to C-terminus: Redox-sensing transcriptional repressor Rex (209 aa).

Residues 16-55 (LYYRFIQNLSLSGKQRVSSAELSEAVKVDSATIRRDFSYF) constitute a DNA-binding region (H-T-H motif). Residue 90–95 (GVGNLG) participates in NAD(+) binding.

Belongs to the transcriptional regulatory Rex family. In terms of assembly, homodimer.

The protein resides in the cytoplasm. Functionally, modulates transcription in response to changes in cellular NADH/NAD(+) redox state. This Bacillus cytotoxicus (strain DSM 22905 / CIP 110041 / 391-98 / NVH 391-98) protein is Redox-sensing transcriptional repressor Rex.